Consider the following 1729-residue polypeptide: Zinc finger CCCH domain-containing protein 13 (1729 aa).

Disordered stretches follow at residues 1–40 and 57–156; these read MSKI…TTET and CRFI…NGDI. The segment covering 10-23 has biased composition (polar residues); sequence VENTKTISESTSRR. The segment at 36–64 adopts a C3H1-type zinc-finger fold; it reads STTETQCRNWLKTGSCLYGNTCRFIHGPS. Residues Ser-64 and Ser-77 each carry the phosphoserine modification. The span at 76–136 shows a compositional bias: basic and acidic residues; that stretch reads RSPERPTGDL…IKIVKERTPE (61 aa). Residues 162-196 are a coiled coil; the sequence is HELSLEMKRQKIQRELMKLEQENMDKREEIIIQKE. Residue Lys-179 forms a Glycyl lysine isopeptide (Lys-Gly) (interchain with G-Cter in SUMO2) linkage. Residues 182–193 show a composition bias toward basic and acidic residues; it reads QENMDKREEIII. Disordered stretches follow at residues 182-528 and 581-1527; these read QENM…IRDV and DVYQ…PISD. A phosphoserine mark is found at Ser-198, Ser-207, Ser-209, and Ser-211. Positions 204-213 are enriched in low complexity; the sequence is SKLSPSPSLR. The segment covering 214-224 has biased composition (basic residues); the sequence is KSSKSPKRKSS. Phosphoserine is present on Ser-242. Polar residues predominate over residues 245–254; that stretch reads LDQQRNSKGN. Phosphothreonine is present on Thr-263. Residue Ser-265 is modified to Phosphoserine. The span at 283–315 shows a compositional bias: basic and acidic residues; that stretch reads KYKVKDRIEEKPRDGKDRGRDFEKQREKRDKPR. 4 positions are modified to phosphoserine: Ser-316, Ser-318, Ser-324, and Ser-327. The segment covering 321–345 has biased composition (low complexity); that stretch reads QHHSPLSSRHHSSSSQSGSSIQRHS. A phosphothreonine mark is found at Thr-353 and Thr-363. The segment covering 358–368 has biased composition (polar residues); it reads YQRTLTPSLRR. Phosphoserine is present on residues Ser-369, Ser-371, and Ser-380. Basic and acidic residues-rich tracts occupy residues 393-528 and 581-636; these read PMRE…IRDV and DVYQ…EKGS. Residues 639–654 are compositionally biased toward polar residues; that stretch reads TRGSQMDSHSSGSNYH. Basic and acidic residues predominate over residues 655–701; the sequence is DSWETRSSYPERDRYPERDTRDPARDSSFERRHGERDRRDNRERDQR. At Ser-704 the chain carries Phosphoserine. A coiled-coil region spans residues 706-865; sequence IRHQGRSEEL…KERERQREWE (160 aa). Residues 710–897 show a composition bias toward basic and acidic residues; sequence GRSEELERDE…IPRDSHEERK (188 aa). Ser-907, Ser-909, Ser-913, Ser-921, Ser-924, Ser-929, Ser-949, Ser-951, and Ser-953 each carry phosphoserine. The segment covering 920–938 has biased composition (basic and acidic residues); it reads HSPDSDTYHSGDDKNEKHR. Residues 957–1035 show a composition bias toward basic and acidic residues; sequence LTEDRQGRWK…GSDRAHDEKK (79 aa). Thr-958 carries the post-translational modification Phosphothreonine. Over residues 1036–1046 the composition is skewed to basic residues; that stretch reads KAKAPKKPVKK. The segment covering 1047–1065 has biased composition (basic and acidic residues); it reads KKEEDVGVERGNLETHEDS. Phosphoserine is present on residues Ser-1069, Ser-1086, Ser-1090, and Ser-1093. A compositionally biased stretch (basic residues) spans 1072–1086; the sequence is KGQKKKNIEKKRKRS. Thr-1109 carries the post-translational modification Phosphothreonine. Composition is skewed to basic and acidic residues over residues 1114–1137 and 1149–1159; these read IKEE…KKEN and PDRTEGLEAEH. Composition is skewed to low complexity over residues 1160-1176 and 1184-1218; these read TAAT…LSSL and AAAS…TNGS. The segment covering 1228–1253 has biased composition (basic and acidic residues); it reads ARGEKVEVSHVTLEDTPHRKLVDQKR. Phosphoserine occurs at positions 1256, 1259, 1273, and 1275. Positions 1278-1288 are enriched in basic and acidic residues; sequence SAHRSGDDQGS. A Phosphoserine modification is found at Ser-1295. Basic and acidic residues-rich tracts occupy residues 1296–1351 and 1359–1440; these read GSRD…DRQV and DSRD…ERTF. Phosphoserine is present on residues Ser-1427, Ser-1443, Ser-1447, Ser-1467, Ser-1470, Ser-1499, and Ser-1526. Basic and acidic residues-rich tracts occupy residues 1447-1482 and 1490-1499; these read SGKR…DRDL and DVSKAERTES.

It belongs to the ZC3H13 family. In terms of assembly, component of the WMM complex, a N6-methyltransferase complex composed of a catalytic subcomplex, named MAC, and of an associated subcomplex, named MACOM. The MAC subcomplex is composed of METTL3 and METTL14. The MACOM subcomplex is composed of WTAP, ZC3H13, CBLL1/HAKAI, VIRMA, and, in some cases of RBM15 (RBM15 or RBM15B). Also a component of a MACOM-like complex, named WTAP complex, composed of WTAP, ZC3H13, CBLL1/HAKAI, VIRMA, RBM15, BCLAF1 and THRAP3.

The protein localises to the nucleus speckle. It is found in the nucleus. The protein resides in the nucleoplasm. In terms of biological role, associated component of the WMM complex, a complex that mediates N6-methyladenosine (m6A) methylation of RNAs, a modification that plays a role in the efficiency of mRNA splicing and RNA processing. Acts as a key regulator of m6A methylation by promoting m6A methylation of mRNAs at the 3'-UTR. Controls embryonic stem cells (ESCs) pluripotency via its role in m6A methylation. In the WMM complex, anchors component of the MACOM subcomplex in the nucleus. Also required for bridging WTAP to the RNA-binding component RBM15 (RBM15 or RBM15B). This Mus musculus (Mouse) protein is Zinc finger CCCH domain-containing protein 13.